Consider the following 292-residue polypeptide: Bifunctional protein FolD (292 aa).

NADP(+)-binding positions include 171-173, I196, and I237; that span reads GAS.

Belongs to the tetrahydrofolate dehydrogenase/cyclohydrolase family. Homodimer.

The enzyme catalyses (6R)-5,10-methylene-5,6,7,8-tetrahydrofolate + NADP(+) = (6R)-5,10-methenyltetrahydrofolate + NADPH. It carries out the reaction (6R)-5,10-methenyltetrahydrofolate + H2O = (6R)-10-formyltetrahydrofolate + H(+). It functions in the pathway one-carbon metabolism; tetrahydrofolate interconversion. Catalyzes the oxidation of 5,10-methylenetetrahydrofolate to 5,10-methenyltetrahydrofolate and then the hydrolysis of 5,10-methenyltetrahydrofolate to 10-formyltetrahydrofolate. The sequence is that of Bifunctional protein FolD from Helicobacter acinonychis (strain Sheeba).